Here is a 496-residue protein sequence, read N- to C-terminus: Glycerol kinase (496 aa).

T12 serves as a coordination point for ADP. The ATP site is built by T12, T13, and S14. T12 contributes to the sn-glycerol 3-phosphate binding site. An ADP-binding site is contributed by R16. R82, E83, Y134, and D244 together coordinate sn-glycerol 3-phosphate. Positions 82, 83, 134, 244, and 245 each coordinate glycerol. Positions 266 and 309 each coordinate ADP. The ATP site is built by T266, G309, Q313, and G410. Residues G410 and N414 each contribute to the ADP site.

Belongs to the FGGY kinase family.

The catalysed reaction is glycerol + ATP = sn-glycerol 3-phosphate + ADP + H(+). The protein operates within polyol metabolism; glycerol degradation via glycerol kinase pathway; sn-glycerol 3-phosphate from glycerol: step 1/1. With respect to regulation, inhibited by fructose 1,6-bisphosphate (FBP). Key enzyme in the regulation of glycerol uptake and metabolism. Catalyzes the phosphorylation of glycerol to yield sn-glycerol 3-phosphate. This chain is Glycerol kinase, found in Treponema denticola (strain ATCC 35405 / DSM 14222 / CIP 103919 / JCM 8153 / KCTC 15104).